Here is a 77-residue protein sequence, read N- to C-terminus: Acyl carrier protein (77 aa).

The Carrier domain occupies Ser2–Gln77. Ser37 bears the O-(pantetheine 4'-phosphoryl)serine mark.

The protein belongs to the acyl carrier protein (ACP) family. Post-translationally, 4'-phosphopantetheine is transferred from CoA to a specific serine of apo-ACP by AcpS. This modification is essential for activity because fatty acids are bound in thioester linkage to the sulfhydryl of the prosthetic group.

The protein resides in the cytoplasm. Its pathway is lipid metabolism; fatty acid biosynthesis. Its function is as follows. Carrier of the growing fatty acid chain in fatty acid biosynthesis. The polypeptide is Acyl carrier protein (Oceanospirillum linum).